The chain runs to 1097 residues: Chitin synthase 2 (1097 aa).

The segment at 1–46 (MAGYGHSTAGGFGSGSGSGPPGPQYMLPQYDEGDDPDADATPAGQG) is disordered. Over 1 to 748 (MAGYGHSTAG…HVEFLYHLLQ (748 aa)) the chain is Extracellular. Positions 8–19 (TAGGFGSGSGSG) are enriched in gly residues. An N-linked (GlcNAc...) asparagine glycan is attached at N55. 2 disordered regions span residues 148–217 (SGHG…YPRY) and 259–322 (SSQI…RPPQ). Residues 284–296 (STTYSSNTGTSAS) show a composition bias toward polar residues. The span at 299–313 (DKFEHYGPIPEEGKH) shows a compositional bias: basic and acidic residues. N416 and N424 each carry an N-linked (GlcNAc...) asparagine glycan. Residues 749–769 (LLFTYFSLANFYLAFYFIAGG) form a helical membrane-spanning segment. Topologically, residues 770 to 786 (LADPHVDPFNSDGHVAR) are cytoplasmic. A helical membrane pass occupies residues 787–807 (IIFNILRYVCVLLICTQFILS). Residues 808-821 (LGNRPQGAKRMYLA) lie on the Extracellular side of the membrane. A helical membrane pass occupies residues 822-842 (SMIIYAVIMVYTTFATIFIVV). The Cytoplasmic portion of the chain corresponds to 843–865 (RQIQPSQKSDDKPDLELGNNVFT). The helical transmembrane segment at 866 to 886 (NLIVSVASTLGLYFVMSFLYL) threads the bilayer. Residues 887–894 (DPWHMFTS) lie on the Extracellular side of the membrane. A helical membrane pass occupies residues 895 to 915 (AIQYFVLLPSYICTLQIYAFC). Over 916–993 (NTHDVTWGTK…QDYYKSVRTY (78 aa)) the chain is Cytoplasmic. Residues 994 to 1014 (MVVSWMVANATLAMAVSEAYG) form a helical membrane-spanning segment. Topologically, residues 1015–1025 (DSEIGDNFYLR) are extracellular. A helical membrane pass occupies residues 1026–1046 (FILWAVAALALFRALGSTTFA). Residues 1047–1097 (AINLVSALVEGRVRLRLNMKGFRWIKEKWGDADVKGKFEGLGDRARGLARR) lie on the Cytoplasmic side of the membrane.

It belongs to the chitin synthase family.

The protein resides in the cell membrane. The catalysed reaction is [(1-&gt;4)-N-acetyl-beta-D-glucosaminyl](n) + UDP-N-acetyl-alpha-D-glucosamine = [(1-&gt;4)-N-acetyl-beta-D-glucosaminyl](n+1) + UDP + H(+). In terms of biological role, polymerizes chitin, a structural polymer of the cell wall and septum, by transferring the sugar moiety of UDP-GlcNAc to the non-reducing end of the growing chitin polymer. The sequence is that of Chitin synthase 2 (chs-2) from Neurospora crassa (strain ATCC 24698 / 74-OR23-1A / CBS 708.71 / DSM 1257 / FGSC 987).